Here is a 236-residue protein sequence, read N- to C-terminus: Ubiquitin carboxyl-terminal hydrolase YUH1 (236 aa).

One can recognise a UCH catalytic domain in the interval A7 to P233. Positions P10 to P15 are interaction with ubiquitin. C90 acts as the Nucleophile in catalysis. The interval F149–P157 is interaction with ubiquitin. The active-site Proton donor is H166. The segment at N219–M228 is interaction with ubiquitin.

Belongs to the peptidase C12 family.

It carries out the reaction Thiol-dependent hydrolysis of ester, thioester, amide, peptide and isopeptide bonds formed by the C-terminal Gly of ubiquitin (a 76-residue protein attached to proteins as an intracellular targeting signal).. Deubiquitinating enzyme (DUB) that controls levels of cellular ubiquitin through processing of ubiquitin precursors and ubiquitinated proteins. Thiol protease that recognizes and hydrolyzes a peptide bond at the C-terminal glycine of either ubiquitin or RUB1. Preferentially cleaves ubiquitin from peptides and small adducts. The sequence is that of Ubiquitin carboxyl-terminal hydrolase YUH1 (YUH1) from Saccharomyces cerevisiae (strain ATCC 204508 / S288c) (Baker's yeast).